The primary structure comprises 508 residues: Light-independent protochlorophyllide reductase subunit B (508 aa).

Residue D36 coordinates [4Fe-4S] cluster. D294 functions as the Proton donor in the catalytic mechanism. 429 to 430 (GM) contributes to the substrate binding site.

It belongs to the ChlB/BchB/BchZ family. As to quaternary structure, protochlorophyllide reductase is composed of three subunits; ChlL, ChlN and ChlB. Forms a heterotetramer of two ChlB and two ChlN subunits. It depends on [4Fe-4S] cluster as a cofactor.

The catalysed reaction is chlorophyllide a + oxidized 2[4Fe-4S]-[ferredoxin] + 2 ADP + 2 phosphate = protochlorophyllide a + reduced 2[4Fe-4S]-[ferredoxin] + 2 ATP + 2 H2O. It participates in porphyrin-containing compound metabolism; chlorophyll biosynthesis (light-independent). In terms of biological role, component of the dark-operative protochlorophyllide reductase (DPOR) that uses Mg-ATP and reduced ferredoxin to reduce ring D of protochlorophyllide (Pchlide) to form chlorophyllide a (Chlide). This reaction is light-independent. The NB-protein (ChlN-ChlB) is the catalytic component of the complex. The sequence is that of Light-independent protochlorophyllide reductase subunit B from Rippkaea orientalis (strain PCC 8801 / RF-1) (Cyanothece sp. (strain PCC 8801)).